The primary structure comprises 303 residues: Proteasome subunit beta (303 aa).

Residues 1–67 (MTWQFPDRLS…SGGTGQLPHG (67 aa)) constitute a propeptide, removed in mature form; by autocatalysis. Thr-68 acts as the Nucleophile in catalysis.

It belongs to the peptidase T1B family. The 20S proteasome core is composed of 14 alpha and 14 beta subunits that assemble into four stacked heptameric rings, resulting in a barrel-shaped structure. The two inner rings, each composed of seven catalytic beta subunits, are sandwiched by two outer rings, each composed of seven alpha subunits. The catalytic chamber with the active sites is on the inside of the barrel. Has a gated structure, the ends of the cylinder being occluded by the N-termini of the alpha-subunits. Is capped by the proteasome-associated ATPase, ARC.

Its subcellular location is the cytoplasm. The enzyme catalyses Cleavage of peptide bonds with very broad specificity.. It participates in protein degradation; proteasomal Pup-dependent pathway. The formation of the proteasomal ATPase ARC-20S proteasome complex, likely via the docking of the C-termini of ARC into the intersubunit pockets in the alpha-rings, may trigger opening of the gate for substrate entry. Interconversion between the open-gate and close-gate conformations leads to a dynamic regulation of the 20S proteasome proteolysis activity. In terms of biological role, component of the proteasome core, a large protease complex with broad specificity involved in protein degradation. This is Proteasome subunit beta from Mycobacterium avium (strain 104).